Here is a 544-residue protein sequence, read N- to C-terminus: MSNSSRNATEQNNKCSAAGVNSVAAALCPLSNCQFSGVVISAIADEQKLEFNNIYKSSCTLSCSYDSQGVLVRIMLDNDQGHVLKEYMLSADTDAAQLGKRSYAVSLESDNLVLRFASDKDQQLFRKVVENVKHLRPKSVFSQRTEESSASQYFQFYGYLSQQQNMMQDYVRTSTYQRAILGNSIDFQDKIVLDVGAGSGILSFFAVQAGAAKVYAIEASNMAQYAQQLVESNNVQHKISVIPGKIEEIELPEKVDVIISEPMGYMLYNERMLETYLHARKWLKPQGKMYPTHGDLHIAPFSDDSLYSEQYNKANFWYQSAFHGVDLTTLHKEGMKEYFRQPIVDTFDIRICMAKSVRHVCDFLNDKENDLHLIDIPLEFHILQTGICHGLAFWFDVEFSGSTQNVWLSTSPTAPLTHWYQVRCLLPMPIFIKQGQTLTGRVLLEANRRQSYDVTIDLHIEGTLISSSNTLDLKNPYFRYTGAPVQAPPGTNTQSPSEQYWTQMDTQQQQQGSRNSNSMLNGGLSVNGMADPGMDINLGLMHPH.

One can recognise an SAM-dependent MTase PRMT-type domain in the interval 150–459 (ASQYFQFYGY…QSYDVTIDLH (310 aa)). S-adenosyl-L-methionine contacts are provided by Gln163, Arg172, Gly196, Glu218, Glu247, and Thr275. Positions 505-520 (DTQQQQQGSRNSNSML) are enriched in polar residues. The segment at 505–527 (DTQQQQQGSRNSNSMLNGGLSVN) is disordered. Arg514 is subject to Asymmetric dimethylarginine; by autocatalysis.

Belongs to the class I-like SAM-binding methyltransferase superfamily. Protein arginine N-methyltransferase family. As to quaternary structure, homodimer. Post-translationally, the dimethylated protein is the major form.

It is found in the cytoplasm. The protein resides in the nucleus. The catalysed reaction is L-arginyl-[protein] + 2 S-adenosyl-L-methionine = N(omega),N(omega)-dimethyl-L-arginyl-[protein] + 2 S-adenosyl-L-homocysteine + 2 H(+). Functionally, methylates (mono- and asymmetric dimethylation) the guanidino nitrogens of arginyl residues in proteins. May methylate histone H3 at 'Arg-17' and activate transcription via chromatin remodeling. This is Histone-arginine methyltransferase CARMER (Art4) from Drosophila grimshawi (Hawaiian fruit fly).